Consider the following 331-residue polypeptide: HPr kinase/phosphorylase (331 aa).

Residues H153 and K174 contribute to the active site. ATP is bound at residue 168-175; the sequence is GKSGLGKS. S175 serves as a coordination point for Mg(2+). Residue D192 is the Proton acceptor; for phosphorylation activity. Proton donor; for dephosphorylation activity of the active site. The interval 217–226 is important for the catalytic mechanism of both phosphorylation and dephosphorylation; sequence MEIRGLGVVD. Position 218 (E218) interacts with Mg(2+). The active site involves R259. Residues 280–285 are important for the catalytic mechanism of dephosphorylation; the sequence is PIFPGK.

It belongs to the HPrK/P family. Homohexamer. Requires Mg(2+) as cofactor.

It catalyses the reaction [HPr protein]-L-serine + ATP = [HPr protein]-O-phospho-L-serine + ADP + H(+). The catalysed reaction is [HPr protein]-O-phospho-L-serine + phosphate + H(+) = [HPr protein]-L-serine + diphosphate. Catalyzes the ATP- as well as the pyrophosphate-dependent phosphorylation of a specific serine residue in HPr, a phosphocarrier protein of the phosphoenolpyruvate-dependent sugar phosphotransferase system (PTS). HprK/P also catalyzes the pyrophosphate-producing, inorganic phosphate-dependent dephosphorylation (phosphorolysis) of seryl-phosphorylated HPr (P-Ser-HPr). The chain is HPr kinase/phosphorylase from Pelodictyon phaeoclathratiforme (strain DSM 5477 / BU-1).